Consider the following 395-residue polypeptide: ATP-dependent RNA helicase eIF4A (395 aa).

The Q motif signature appears at 22–50 (TSFDDLGLKDELLRGIYGYGFENPSSIQQ). The Helicase ATP-binding domain maps to 53–223 (ILPVIKGNDV…GKFMRDPVRI (171 aa)). Position 66–73 (66–73 (AQSGTGKT)) interacts with ATP. Positions 171–174 (DEAD) match the DEAD box motif. Positions 234 to 395 (GIKQFYIDVE…EMPTNIADLI (162 aa)) constitute a Helicase C-terminal domain.

This sequence belongs to the DEAD box helicase family. eIF4A subfamily. Component of the eIF4F complex, which composition varies with external and internal environmental conditions. It is composed of at least eIF4A, eIF4E and eIF4G.

It localises to the cytoplasm. The catalysed reaction is ATP + H2O = ADP + phosphate + H(+). Functionally, ATP-dependent RNA helicase which is a subunit of the eIF4F complex involved in cap recognition and is required for mRNA binding to ribosome. In the current model of translation initiation, eIF4A unwinds RNA secondary structures in the 5'-UTR of mRNAs which is necessary to allow efficient binding of the small ribosomal subunit, and subsequent scanning for the initiator codon. The protein is ATP-dependent RNA helicase eIF4A (TIF1) of Yarrowia lipolytica (strain CLIB 122 / E 150) (Yeast).